We begin with the raw amino-acid sequence, 246 residues long: 14-3-3 protein beta/alpha (246 aa).

N-acetylmethionine; in 14-3-3 protein beta/alpha; alternate is present on methionine 1. Methionine 1 is modified (N-acetylmethionine). Position 2 is an N-acetylthreonine; in 14-3-3 protein beta/alpha, N-terminally processed (threonine 2). Phosphothreonine is present on threonine 2. The residue at position 5 (lysine 5) is an N6-acetyllysine. The residue at position 51 (lysine 51) is an N6-acetyllysine; alternate. A Glycyl lysine isopeptide (Lys-Gly) (interchain with G-Cter in SUMO2); alternate cross-link involves residue lysine 51. Serine 60 bears the Phosphoserine mark. Lysine 70 is modified (N6-acetyllysine). A 3'-nitrotyrosine mark is found at tyrosine 84 and tyrosine 106. Lysine 117 is subject to N6-acetyllysine. Residues serine 186 and serine 232 each carry the phosphoserine modification.

Belongs to the 14-3-3 family. Homodimer. Interacts with SAMSN1 and PRKCE. Interacts with AKAP13. Interacts with SSH1 and TORC2/CRTC2. Interacts with ABL1; the interaction results in cytoplasmic location of ABL1 and inhibition of cABL-mediated apoptosis. Interacts with ROR2 (dimer); the interaction results in phosphorylation of YWHAB on tyrosine residues. Interacts with GAB2. Interacts with YAP1 (phosphorylated form). Interacts with the phosphorylated (by AKT1) form of SRPK2. Interacts with PKA-phosphorylated AANAT. Interacts with MYO1C. Interacts with SIRT2. Interacts with the 'Thr-369' phosphorylated form of DAPK2. Interacts with PI4KB, TBC1D22A and TBC1D22B. Interacts with the 'Ser-1134' and 'Ser-1161' phosphorylated form of SOS1. Interacts (via phosphorylated form) with YWHAB; this interaction occurs in a protein kinase AKT1-dependent manner. Interacts with SLITRK1. Interacts with SYNPO2 (phosphorylated form); YWHAB competes with ACTN2 for interaction with SYNPO2. Interacts with RIPOR2 (via phosphorylated form) isoform 2; this interaction occurs in a chemokine-dependent manner and does not compete for binding of RIPOR2 with RHOA nor blocks inhibition of RIPOR2-mediated RHOA activity. Interacts with MARK2 and MARK3. Interacts with TESK1; the interaction is dependent on the phosphorylation of TESK1 'Ser-437' and inhibits TESK1 kinase activity. Interacts with MEFV. Interacts with HDAC4. Interacts with ADAM22 (via C-terminus). In terms of assembly, (Microbial infection) Interacts with herpes simplex virus 1 protein UL46. As to quaternary structure, (Microbial infection) Probably interacts with Chlamydia trachomatis protein IncG. Post-translationally, the alpha, brain-specific form differs from the beta form in being phosphorylated. Phosphorylated on Ser-60 by protein kinase C delta type catalytic subunit in a sphingosine-dependent fashion.

The protein localises to the cytoplasm. Its subcellular location is the melanosome. The protein resides in the vacuole membrane. Its function is as follows. Adapter protein implicated in the regulation of a large spectrum of both general and specialized signaling pathways. Binds to a large number of partners, usually by recognition of a phosphoserine or phosphothreonine motif. Binding generally results in the modulation of the activity of the binding partner. Negative regulator of osteogenesis. Blocks the nuclear translocation of the phosphorylated form (by AKT1) of SRPK2 and antagonizes its stimulatory effect on cyclin D1 expression resulting in blockage of neuronal apoptosis elicited by SRPK2. Negative regulator of signaling cascades that mediate activation of MAP kinases via AKAP13. The chain is 14-3-3 protein beta/alpha (YWHAB) from Homo sapiens (Human).